The chain runs to 313 residues: Porphobilinogen deaminase (313 aa).

S-(dipyrrolylmethanemethyl)cysteine is present on Cys242.

The protein belongs to the HMBS family. Monomer. The cofactor is dipyrromethane.

It carries out the reaction 4 porphobilinogen + H2O = hydroxymethylbilane + 4 NH4(+). Its pathway is porphyrin-containing compound metabolism; protoporphyrin-IX biosynthesis; coproporphyrinogen-III from 5-aminolevulinate: step 2/4. Its function is as follows. Tetrapolymerization of the monopyrrole PBG into the hydroxymethylbilane pre-uroporphyrinogen in several discrete steps. The protein is Porphobilinogen deaminase of Proteus mirabilis (strain HI4320).